We begin with the raw amino-acid sequence, 296 residues long: Nucleotide-binding protein str0831 (296 aa).

ATP is bound at residue 13–20 (GMSGAGKT). 63–66 (DMRS) serves as a coordination point for GTP.

The protein belongs to the RapZ-like family.

Displays ATPase and GTPase activities. In Streptococcus thermophilus (strain CNRZ 1066), this protein is Nucleotide-binding protein str0831.